The following is a 265-amino-acid chain: Protein HesA, vegetative (265 aa).

The protein belongs to the HesA/MoeB/ThiF family.

The protein is Protein HesA, vegetative (hesA2) of Trichormus variabilis (strain ATCC 29413 / PCC 7937) (Anabaena variabilis).